A 512-amino-acid chain; its full sequence is 2-isopropylmalate synthase (512 aa).

Positions 4 to 266 (IQFFDTTLRD…ETNIVLNQFK (263 aa)) constitute a Pyruvate carboxyltransferase domain. Residues aspartate 13, histidine 201, histidine 203, and asparagine 237 each coordinate Mn(2+). The segment at 390 to 512 (ELKHLQVQYV…SKQADFEEVK (123 aa)) is regulatory domain.

It belongs to the alpha-IPM synthase/homocitrate synthase family. LeuA type 1 subfamily. Homodimer. Mn(2+) serves as cofactor.

It is found in the cytoplasm. The catalysed reaction is 3-methyl-2-oxobutanoate + acetyl-CoA + H2O = (2S)-2-isopropylmalate + CoA + H(+). The protein operates within amino-acid biosynthesis; L-leucine biosynthesis; L-leucine from 3-methyl-2-oxobutanoate: step 1/4. Functionally, catalyzes the condensation of the acetyl group of acetyl-CoA with 3-methyl-2-oxobutanoate (2-ketoisovalerate) to form 3-carboxy-3-hydroxy-4-methylpentanoate (2-isopropylmalate). In Listeria innocua serovar 6a (strain ATCC BAA-680 / CLIP 11262), this protein is 2-isopropylmalate synthase.